The sequence spans 334 residues: Forkhead box protein N2 (334 aa).

Disordered regions lie at residues 1 to 52 (MGPV…SGTT) and 83 to 108 (SPLY…ASSK). Residues 108–204 (KPPYSFSLLI…QALKKQPFSS (97 aa)) constitute a DNA-binding region (fork-head).

Its subcellular location is the nucleus. The protein is Forkhead box protein N2 of Xenopus tropicalis (Western clawed frog).